The following is a 267-amino-acid chain: Regulatory protein RecX (267 aa).

The protein belongs to the RecX family.

Its subcellular location is the cytoplasm. Functionally, modulates RecA activity. This is Regulatory protein RecX from Staphylococcus carnosus (strain TM300).